A 290-amino-acid polypeptide reads, in one-letter code: GTPase Era (290 aa).

Residues 2 to 169 form the Era-type G domain; it reads KSGFVSIIGR…KDKIYANLQE (168 aa). The G1 stretch occupies residues 10 to 17; it reads GRPSTGKS. Residue 10–17 participates in GTP binding; the sequence is GRPSTGKS. A G2 region spans residues 36 to 40; sequence QTTRN. A G3 region spans residues 57–60; sequence DTPG. Residues 57-61 and 119-122 each bind GTP; these read DTPGF and NKID. The G4 stretch occupies residues 119–122; the sequence is NKID. The segment at 148 to 150 is G5; sequence ISA. One can recognise a KH type-2 domain in the interval 200 to 276; that stretch reads LKEELPYSLY…DLFLQVKLRK (77 aa).

It belongs to the TRAFAC class TrmE-Era-EngA-EngB-Septin-like GTPase superfamily. Era GTPase family. In terms of assembly, monomer.

It is found in the cytoplasm. The protein resides in the cell inner membrane. Its function is as follows. An essential GTPase that binds both GDP and GTP, with rapid nucleotide exchange. Plays a role in 16S rRNA processing and 30S ribosomal subunit biogenesis and possibly also in cell cycle regulation and energy metabolism. This Borrelia hermsii (strain HS1 / DAH) protein is GTPase Era.